The sequence spans 174 residues: MTQTIFMVGARGAGKTTVGSALALALGYQFIDTDLFMQQTTQMSVAEMVEQEGWLGFRRRESIALQTVTQPSTVVATGGGAILAEENRRFMRQHGKVIYLRSPAEVLAQRLEEYPQDTQRPTLTGRPIAEEMLEVLAAREALYQEAAHYVMDGTGGPQQVVEQILSALQLETVK.

Residue 12–17 (GAGKTT) participates in ATP binding. Threonine 16 and aspartate 32 together coordinate Mg(2+). Substrate is bound by residues aspartate 34, arginine 58, and glycine 79. The tract at residues 112–126 (EEYPQDTQRPTLTGR) is LID domain. Arginine 120 contacts ATP. Substrate is bound at residue arginine 139.

It belongs to the shikimate kinase family. AroL subfamily. Monomer. The cofactor is Mg(2+).

The protein resides in the cytoplasm. The catalysed reaction is shikimate + ATP = 3-phosphoshikimate + ADP + H(+). It functions in the pathway metabolic intermediate biosynthesis; chorismate biosynthesis; chorismate from D-erythrose 4-phosphate and phosphoenolpyruvate: step 5/7. In terms of biological role, catalyzes the specific phosphorylation of the 3-hydroxyl group of shikimic acid using ATP as a cosubstrate. This Serratia proteamaculans (strain 568) protein is Shikimate kinase 2.